Consider the following 117-residue polypeptide: Protein YchN (117 aa).

The protein to M.jannaschii MJ0989. Homohexamer. The hexamer is formed by a dimer of trimers.

In Escherichia coli O157:H7, this protein is Protein YchN (ychN).